Here is a 665-residue protein sequence, read N- to C-terminus: DNA mismatch repair protein MutL (665 aa).

It belongs to the DNA mismatch repair MutL/HexB family.

In terms of biological role, this protein is involved in the repair of mismatches in DNA. It is required for dam-dependent methyl-directed DNA mismatch repair. May act as a 'molecular matchmaker', a protein that promotes the formation of a stable complex between two or more DNA-binding proteins in an ATP-dependent manner without itself being part of a final effector complex. In Acidobacterium capsulatum (strain ATCC 51196 / DSM 11244 / BCRC 80197 / JCM 7670 / NBRC 15755 / NCIMB 13165 / 161), this protein is DNA mismatch repair protein MutL.